The chain runs to 388 residues: Chorismate synthase (388 aa).

NADP(+) is bound by residues Arg39 and Arg45. FMN contacts are provided by residues 130 to 132 (RSS), 251 to 252 (NA), Gly296, 311 to 315 (KPIPT), and Arg337.

It belongs to the chorismate synthase family. Homotetramer. FMNH2 is required as a cofactor.

The catalysed reaction is 5-O-(1-carboxyvinyl)-3-phosphoshikimate = chorismate + phosphate. It participates in metabolic intermediate biosynthesis; chorismate biosynthesis; chorismate from D-erythrose 4-phosphate and phosphoenolpyruvate: step 7/7. Catalyzes the anti-1,4-elimination of the C-3 phosphate and the C-6 proR hydrogen from 5-enolpyruvylshikimate-3-phosphate (EPSP) to yield chorismate, which is the branch point compound that serves as the starting substrate for the three terminal pathways of aromatic amino acid biosynthesis. This reaction introduces a second double bond into the aromatic ring system. In Streptococcus pneumoniae serotype 19F (strain G54), this protein is Chorismate synthase.